A 265-amino-acid chain; its full sequence is Indole-3-glycerol phosphate synthase (265 aa).

Belongs to the TrpC family.

It carries out the reaction 1-(2-carboxyphenylamino)-1-deoxy-D-ribulose 5-phosphate + H(+) = (1S,2R)-1-C-(indol-3-yl)glycerol 3-phosphate + CO2 + H2O. Its pathway is amino-acid biosynthesis; L-tryptophan biosynthesis; L-tryptophan from chorismate: step 4/5. The sequence is that of Indole-3-glycerol phosphate synthase from Hyphomonas neptunium (strain ATCC 15444).